We begin with the raw amino-acid sequence, 349 residues long: Interleukin-10 receptor subunit beta (349 aa).

The N-terminal stretch at 1–19 is a signal peptide; the sequence is MAPCVAGWLGGFLLVPALG. Residues 20-220 are Extracellular-facing; it reads MIPPPEKVRM…RTGNDEITPS (201 aa). Fibronectin type-III domains follow at residues 23–111 and 112–215; these read PPEK…VEDT and IIGP…TGND. The N-linked (GlcNAc...) asparagine glycan is linked to Asn-49. An intrachain disulfide couples Cys-66 to Cys-74. 3 N-linked (GlcNAc...) asparagine glycosylation sites follow: Asn-102, Asn-161, and Asn-199. Cys-188 and Cys-209 are joined by a disulfide. The helical transmembrane segment at 221–241 threads the bilayer; it reads WIVAIILIVSVLVVFLFLLGC. Residues 242–349 lie on the Cytoplasmic side of the membrane; it reads FVVLWLIYKK…PKLLTSTSEV (108 aa). At Ser-299 the chain carries Phosphoserine. Residues 300 to 349 are disordered; that stretch reads EESEGSKQSPEDNCASEPPSDPGPRELESKDEAPSPPHDDPKLLTSTSEV. Residues 322–341 are compositionally biased toward basic and acidic residues; that stretch reads GPRELESKDEAPSPPHDDPK.

This sequence belongs to the type II cytokine receptor family. As to quaternary structure, heterodimer with IFNLR1.

The protein resides in the membrane. In terms of biological role, shared cell surface receptor required for the activation of five class 2 cytokines: IL10, IL22, IL26, IL28, and IFNL1. The IFNLR1/IL10RB dimer is a receptor for the cytokine ligands IFNL2 and IFNL3 and mediates their antiviral activity. The ligand/receptor complex stimulate the activation of the JAK/STAT signaling pathway leading to the expression of IFN-stimulated genes (ISG), which contribute to the antiviral state. The chain is Interleukin-10 receptor subunit beta (Il10rb) from Mus musculus (Mouse).